We begin with the raw amino-acid sequence, 316 residues long: 4-hydroxy-3-methylbut-2-enyl diphosphate reductase (316 aa).

Cysteine 12 lines the [4Fe-4S] cluster pocket. Residues histidine 41 and histidine 74 each contribute to the (2E)-4-hydroxy-3-methylbut-2-enyl diphosphate site. Dimethylallyl diphosphate is bound by residues histidine 41 and histidine 74. Isopentenyl diphosphate is bound by residues histidine 41 and histidine 74. Residue cysteine 96 participates in [4Fe-4S] cluster binding. Histidine 124 contributes to the (2E)-4-hydroxy-3-methylbut-2-enyl diphosphate binding site. Histidine 124 contacts dimethylallyl diphosphate. Histidine 124 serves as a coordination point for isopentenyl diphosphate. Residue glutamate 126 is the Proton donor of the active site. Position 167 (threonine 167) interacts with (2E)-4-hydroxy-3-methylbut-2-enyl diphosphate. Residue cysteine 197 participates in [4Fe-4S] cluster binding. Serine 225, serine 226, asparagine 227, and serine 269 together coordinate (2E)-4-hydroxy-3-methylbut-2-enyl diphosphate. 4 residues coordinate dimethylallyl diphosphate: serine 225, serine 226, asparagine 227, and serine 269. Residues serine 225, serine 226, asparagine 227, and serine 269 each coordinate isopentenyl diphosphate.

It belongs to the IspH family. In terms of assembly, homodimer. [4Fe-4S] cluster serves as cofactor.

The catalysed reaction is isopentenyl diphosphate + 2 oxidized [2Fe-2S]-[ferredoxin] + H2O = (2E)-4-hydroxy-3-methylbut-2-enyl diphosphate + 2 reduced [2Fe-2S]-[ferredoxin] + 2 H(+). The enzyme catalyses dimethylallyl diphosphate + 2 oxidized [2Fe-2S]-[ferredoxin] + H2O = (2E)-4-hydroxy-3-methylbut-2-enyl diphosphate + 2 reduced [2Fe-2S]-[ferredoxin] + 2 H(+). It functions in the pathway isoprenoid biosynthesis; dimethylallyl diphosphate biosynthesis; dimethylallyl diphosphate from (2E)-4-hydroxy-3-methylbutenyl diphosphate: step 1/1. It participates in isoprenoid biosynthesis; isopentenyl diphosphate biosynthesis via DXP pathway; isopentenyl diphosphate from 1-deoxy-D-xylulose 5-phosphate: step 6/6. In terms of biological role, catalyzes the conversion of 1-hydroxy-2-methyl-2-(E)-butenyl 4-diphosphate (HMBPP) into a mixture of isopentenyl diphosphate (IPP) and dimethylallyl diphosphate (DMAPP). Acts in the terminal step of the DOXP/MEP pathway for isoprenoid precursor biosynthesis. This Escherichia coli (strain ATCC 8739 / DSM 1576 / NBRC 3972 / NCIMB 8545 / WDCM 00012 / Crooks) protein is 4-hydroxy-3-methylbut-2-enyl diphosphate reductase.